A 328-amino-acid chain; its full sequence is Ribosomal RNA small subunit methyltransferase H (328 aa).

Residues 35–37 (GSH), D60, F87, D113, and Q120 each bind S-adenosyl-L-methionine.

This sequence belongs to the methyltransferase superfamily. RsmH family.

The protein localises to the cytoplasm. The enzyme catalyses cytidine(1402) in 16S rRNA + S-adenosyl-L-methionine = N(4)-methylcytidine(1402) in 16S rRNA + S-adenosyl-L-homocysteine + H(+). In terms of biological role, specifically methylates the N4 position of cytidine in position 1402 (C1402) of 16S rRNA. The chain is Ribosomal RNA small subunit methyltransferase H from Chlorobium chlorochromatii (strain CaD3).